The primary structure comprises 98 residues: NADH-ubiquinone oxidoreductase chain 4L (98 aa).

The next 3 helical transmembrane spans lie at 1 to 21 (MAPINLNLILAFSLALLGVLI), 28 to 48 (STLLCLEGMMLSLFILMTLLI), and 59 to 79 (APLILLVFSACEAGVGLALLV).

This sequence belongs to the complex I subunit 4L family. Core subunit of respiratory chain NADH dehydrogenase (Complex I) which is composed of 45 different subunits.

The protein resides in the mitochondrion inner membrane. The enzyme catalyses a ubiquinone + NADH + 5 H(+)(in) = a ubiquinol + NAD(+) + 4 H(+)(out). In terms of biological role, core subunit of the mitochondrial membrane respiratory chain NADH dehydrogenase (Complex I) which catalyzes electron transfer from NADH through the respiratory chain, using ubiquinone as an electron acceptor. Part of the enzyme membrane arm which is embedded in the lipid bilayer and involved in proton translocation. This chain is NADH-ubiquinone oxidoreductase chain 4L (MT-ND4L), found in Perameles gunnii (Eastern barred bandicoot).